Reading from the N-terminus, the 355-residue chain is DNA polymerase IV (355 aa).

Positions 7–188 constitute a UmuC domain; the sequence is IIHIDMDCFY…LPVRKLFGVG (182 aa). Mg(2+) is bound by residues Asp-11 and Asp-106. Glu-107 is a catalytic residue.

This sequence belongs to the DNA polymerase type-Y family. As to quaternary structure, monomer. Mg(2+) serves as cofactor.

The protein resides in the cytoplasm. It catalyses the reaction DNA(n) + a 2'-deoxyribonucleoside 5'-triphosphate = DNA(n+1) + diphosphate. In terms of biological role, poorly processive, error-prone DNA polymerase involved in untargeted mutagenesis. Copies undamaged DNA at stalled replication forks, which arise in vivo from mismatched or misaligned primer ends. These misaligned primers can be extended by PolIV. Exhibits no 3'-5' exonuclease (proofreading) activity. May be involved in translesional synthesis, in conjunction with the beta clamp from PolIII. The sequence is that of DNA polymerase IV from Legionella pneumophila (strain Corby).